Here is a 739-residue protein sequence, read N- to C-terminus: Phosphoribosylformylglycinamidine synthase subunit PurL (739 aa).

The active site involves His-53. 2 residues coordinate ATP: Tyr-56 and Lys-95. Glu-97 contacts Mg(2+). Substrate-binding positions include 98–101 (SHNH) and Arg-120. His-99 acts as the Proton acceptor in catalysis. Position 121 (Asp-121) interacts with Mg(2+). Gln-244 is a substrate binding site. Asp-274 contributes to the Mg(2+) binding site. Residue 318–320 (ESQ) coordinates substrate. Positions 501 and 538 each coordinate ATP. Asn-539 is a Mg(2+) binding site. A substrate-binding site is contributed by Ser-541.

Belongs to the FGAMS family. In terms of assembly, monomer. Part of the FGAM synthase complex composed of 1 PurL, 1 PurQ and 2 PurS subunits.

The protein localises to the cytoplasm. The catalysed reaction is N(2)-formyl-N(1)-(5-phospho-beta-D-ribosyl)glycinamide + L-glutamine + ATP + H2O = 2-formamido-N(1)-(5-O-phospho-beta-D-ribosyl)acetamidine + L-glutamate + ADP + phosphate + H(+). It functions in the pathway purine metabolism; IMP biosynthesis via de novo pathway; 5-amino-1-(5-phospho-D-ribosyl)imidazole from N(2)-formyl-N(1)-(5-phospho-D-ribosyl)glycinamide: step 1/2. In terms of biological role, part of the phosphoribosylformylglycinamidine synthase complex involved in the purines biosynthetic pathway. Catalyzes the ATP-dependent conversion of formylglycinamide ribonucleotide (FGAR) and glutamine to yield formylglycinamidine ribonucleotide (FGAM) and glutamate. The FGAM synthase complex is composed of three subunits. PurQ produces an ammonia molecule by converting glutamine to glutamate. PurL transfers the ammonia molecule to FGAR to form FGAM in an ATP-dependent manner. PurS interacts with PurQ and PurL and is thought to assist in the transfer of the ammonia molecule from PurQ to PurL. In Listeria monocytogenes serotype 4a (strain HCC23), this protein is Phosphoribosylformylglycinamidine synthase subunit PurL.